A 101-amino-acid chain; its full sequence is Small ribosomal subunit protein uS10 (101 aa).

Belongs to the universal ribosomal protein uS10 family. Part of the 30S ribosomal subunit.

In terms of biological role, involved in the binding of tRNA to the ribosomes. The chain is Small ribosomal subunit protein uS10 from Corynebacterium urealyticum (strain ATCC 43042 / DSM 7109).